Reading from the N-terminus, the 162-residue chain is Transcription elongation factor GreA (162 aa).

Residues 46-77 (RENAEYKAAREEQTRLNNMVTRLQEEIERAQV) are a coiled coil.

The protein belongs to the GreA/GreB family.

Functionally, necessary for efficient RNA polymerase transcription elongation past template-encoded arresting sites. The arresting sites in DNA have the property of trapping a certain fraction of elongating RNA polymerases that pass through, resulting in locked ternary complexes. Cleavage of the nascent transcript by cleavage factors such as GreA or GreB allows the resumption of elongation from the new 3'terminus. GreA releases sequences of 2 to 3 nucleotides. The polypeptide is Transcription elongation factor GreA (Treponema pallidum (strain Nichols)).